Reading from the N-terminus, the 377-residue chain is Phosphatidylglycerol--prolipoprotein diacylglyceryl transferase (377 aa).

Helical transmembrane passes span 18 to 38 (PVPL…AVVV), 48 to 68 (MDPA…IVGA), 93 to 113 (IWNG…GAWL), and 119 to 139 (GISL…AQAI). Position 141 (arginine 141) interacts with a 1,2-diacyl-sn-glycero-3-phospho-(1'-sn-glycerol). A run of 3 helical transmembrane segments spans residues 177–197 (QPTF…LLLV), 208–228 (LFAL…MLRI), and 238–258 (RVNI…LLVV). A disordered region spans residues 265-377 (DVSPQEQRAL…RTRVERPPAT (113 aa)). Composition is skewed to low complexity over residues 288 to 297 (AAGETAGETR) and 308 to 344 (GVDV…DADG).

It belongs to the Lgt family.

The protein localises to the cell membrane. It catalyses the reaction L-cysteinyl-[prolipoprotein] + a 1,2-diacyl-sn-glycero-3-phospho-(1'-sn-glycerol) = an S-1,2-diacyl-sn-glyceryl-L-cysteinyl-[prolipoprotein] + sn-glycerol 1-phosphate + H(+). Its pathway is protein modification; lipoprotein biosynthesis (diacylglyceryl transfer). Functionally, catalyzes the transfer of the diacylglyceryl group from phosphatidylglycerol to the sulfhydryl group of the N-terminal cysteine of a prolipoprotein, the first step in the formation of mature lipoproteins. In Frankia alni (strain DSM 45986 / CECT 9034 / ACN14a), this protein is Phosphatidylglycerol--prolipoprotein diacylglyceryl transferase.